The sequence spans 620 residues: 1-deoxy-D-xylulose-5-phosphate synthase (620 aa).

Thiamine diphosphate contacts are provided by residues His80 and 121–123 (GHS). Residue Asp152 participates in Mg(2+) binding. Thiamine diphosphate contacts are provided by residues 153–154 (GA), Asn181, Tyr288, and Glu370. Position 181 (Asn181) interacts with Mg(2+).

It belongs to the transketolase family. DXPS subfamily. In terms of assembly, homodimer. The cofactor is Mg(2+). Thiamine diphosphate serves as cofactor.

The enzyme catalyses D-glyceraldehyde 3-phosphate + pyruvate + H(+) = 1-deoxy-D-xylulose 5-phosphate + CO2. It functions in the pathway metabolic intermediate biosynthesis; 1-deoxy-D-xylulose 5-phosphate biosynthesis; 1-deoxy-D-xylulose 5-phosphate from D-glyceraldehyde 3-phosphate and pyruvate: step 1/1. Its function is as follows. Catalyzes the acyloin condensation reaction between C atoms 2 and 3 of pyruvate and glyceraldehyde 3-phosphate to yield 1-deoxy-D-xylulose-5-phosphate (DXP). The chain is 1-deoxy-D-xylulose-5-phosphate synthase from Enterobacter sp. (strain 638).